The primary structure comprises 450 residues: Tubulin alpha-2 chain (450 aa).

GTP contacts are provided by glutamine 11, glutamate 71, glycine 144, threonine 145, threonine 179, asparagine 206, and asparagine 228. Glutamate 71 is a binding site for Mg(2+). Residue glutamate 254 is part of the active site. A Phosphothreonine modification is found at threonine 349. The tract at residues 430–450 (KDYEEVGAEGGDDEDDEGEEY) is disordered. Residues 431–450 (DYEEVGAEGGDDEDDEGEEY) show a composition bias toward acidic residues.

Belongs to the tubulin family. In terms of assembly, dimer of alpha and beta chains. A typical microtubule is a hollow water-filled tube with an outer diameter of 25 nm and an inner diameter of 15 nM. Alpha-beta heterodimers associate head-to-tail to form protofilaments running lengthwise along the microtubule wall with the beta-tubulin subunit facing the microtubule plus end conferring a structural polarity. Microtubules usually have 13 protofilaments but different protofilament numbers can be found in some organisms and specialized cells. Requires Mg(2+) as cofactor. Post-translationally, undergoes a tyrosination/detyrosination cycle, the cyclic removal and re-addition of a C-terminal tyrosine residue by the enzymes tubulin tyrosine carboxypeptidase (TTCP) and tubulin tyrosine ligase (TTL), respectively. Acetylation of alpha chains at Lys-40 stabilizes microtubules and affects affinity and processivity of microtubule motors. This modification has a role in multiple cellular functions, ranging from cell motility, cell cycle progression or cell differentiation to intracellular trafficking and signaling.

The protein localises to the cytoplasm. Its subcellular location is the cytoskeleton. It catalyses the reaction GTP + H2O = GDP + phosphate + H(+). Functionally, tubulin is the major constituent of microtubules, a cylinder consisting of laterally associated linear protofilaments composed of alpha- and beta-tubulin heterodimers. Microtubules grow by the addition of GTP-tubulin dimers to the microtubule end, where a stabilizing cap forms. Below the cap, tubulin dimers are in GDP-bound state, owing to GTPase activity of alpha-tubulin. This chain is Tubulin alpha-2 chain (TUBA2), found in Arabidopsis thaliana (Mouse-ear cress).